Reading from the N-terminus, the 372-residue chain is Spermidine/putrescine import ATP-binding protein PotA (372 aa).

The 231-residue stretch at 11–241 (IELRSIKKSY…PANLFVARFI (231 aa)) folds into the ABC transporter domain. 43 to 50 (GPSGCGKT) is a binding site for ATP.

The protein belongs to the ABC transporter superfamily. Spermidine/putrescine importer (TC 3.A.1.11.1) family. In terms of assembly, the complex is composed of two ATP-binding proteins (PotA), two transmembrane proteins (PotB and PotC) and a solute-binding protein (PotD).

It is found in the cell inner membrane. It catalyses the reaction ATP + H2O + polyamine-[polyamine-binding protein]Side 1 = ADP + phosphate + polyamineSide 2 + [polyamine-binding protein]Side 1.. Part of the ABC transporter complex PotABCD involved in spermidine/putrescine import. Responsible for energy coupling to the transport system. The polypeptide is Spermidine/putrescine import ATP-binding protein PotA (Haemophilus influenzae (strain ATCC 51907 / DSM 11121 / KW20 / Rd)).